The following is a 310-amino-acid chain: Ribose-phosphate pyrophosphokinase (310 aa).

ATP is bound by residues 33 to 35 (DGE) and 92 to 93 (RQ). The Mg(2+) site is built by His127 and Asp166. Lys189 is a catalytic residue. Residues Arg191, Asp215, and 219-223 (DTAGT) contribute to the D-ribose 5-phosphate site.

It belongs to the ribose-phosphate pyrophosphokinase family. Class I subfamily. As to quaternary structure, homohexamer. The cofactor is Mg(2+).

Its subcellular location is the cytoplasm. The catalysed reaction is D-ribose 5-phosphate + ATP = 5-phospho-alpha-D-ribose 1-diphosphate + AMP + H(+). It functions in the pathway metabolic intermediate biosynthesis; 5-phospho-alpha-D-ribose 1-diphosphate biosynthesis; 5-phospho-alpha-D-ribose 1-diphosphate from D-ribose 5-phosphate (route I): step 1/1. Functionally, involved in the biosynthesis of the central metabolite phospho-alpha-D-ribosyl-1-pyrophosphate (PRPP) via the transfer of pyrophosphoryl group from ATP to 1-hydroxyl of ribose-5-phosphate (Rib-5-P). This is Ribose-phosphate pyrophosphokinase from Bordetella pertussis (strain Tohama I / ATCC BAA-589 / NCTC 13251).